A 663-amino-acid chain; its full sequence is Dual specificity protein phosphatase 8 (663 aa).

One can recognise a Rhodanese domain in the interval 23–138 (GPGGPLVIDS…FSSCFPGLCE (116 aa)). Residues 160-302 (GLTRILPHLY…LLEYERSLKL (143 aa)) enclose the Tyrosine-protein phosphatase domain. Residue C246 is the Phosphocysteine intermediate of the active site. 2 disordered regions span residues 313 to 367 (LGTP…STAP) and 404 to 624 (YAPS…FKRR). Composition is skewed to low complexity over residues 334–353 (STSE…REGS), 427–448 (LDSP…PDSV), and 546–557 (SAGAPGPGNSSS). A compositionally biased stretch (gly residues) spans 558-577 (SGGGGGGGGGGGGGGGGGGS). Low complexity predominate over residues 578 to 600 (SSSNSSSSSSSSSSSSSSSSSSS).

Belongs to the protein-tyrosine phosphatase family. Non-receptor class dual specificity subfamily. Monomer. Expressed predominantly in brain and lung.

Its subcellular location is the cytoplasm. The protein localises to the nucleus. It carries out the reaction O-phospho-L-tyrosyl-[protein] + H2O = L-tyrosyl-[protein] + phosphate. The enzyme catalyses O-phospho-L-seryl-[protein] + H2O = L-seryl-[protein] + phosphate. It catalyses the reaction O-phospho-L-threonyl-[protein] + H2O = L-threonyl-[protein] + phosphate. Functionally, has phosphatase activity with synthetic phosphatase substrates and negatively regulates mitogen-activated protein kinase activity, presumably by catalysing their dephosphorylation. Expected to display protein phosphatase activity toward phosphotyrosine, phosphoserine and phosphothreonine residues. In Mus musculus (Mouse), this protein is Dual specificity protein phosphatase 8 (Dusp8).